We begin with the raw amino-acid sequence, 366 residues long: MQVKDQLSSLQPYKPGKSPEQMKEVYGDHSFVKLASNENPFGCSPRVLDELQKSWLDHALYPDGGATTLRQTIANKLHVKMEQVLCGSGLDEVIQMISRAVLKAGDNIVTAEATFPQYRHHAIIEGCEVKEVALNNGVYDLDEISSVVDNNTKIVWICNPNNPTGTYVNDRKLTQFIEGISENTLIVIDEAYYEYVTAKDFPETLPLLEKHKNILVLRTFSKAYGLASFRIGYAIGQEELIEKLNVVRLPFNVSSLAQKAATIAFGDDEFIEEIVRVNTEGLRQYESFCKENEIPFYQSQTNFIFLPVENGGEIYEACAHAGFIIRPFPNGVRITVGTREQNEGVISVLQQHFENKKRKSRDEANA.

A compositionally biased stretch (polar residues) spans 1–11; sequence MQVKDQLSSLQ. Residues 1-21 are disordered; the sequence is MQVKDQLSSLQPYKPGKSPEQ. Lys-222 bears the N6-(pyridoxal phosphate)lysine mark.

The protein belongs to the class-II pyridoxal-phosphate-dependent aminotransferase family. Histidinol-phosphate aminotransferase subfamily. In terms of assembly, homodimer. It depends on pyridoxal 5'-phosphate as a cofactor.

The catalysed reaction is L-histidinol phosphate + 2-oxoglutarate = 3-(imidazol-4-yl)-2-oxopropyl phosphate + L-glutamate. It functions in the pathway amino-acid biosynthesis; L-histidine biosynthesis; L-histidine from 5-phospho-alpha-D-ribose 1-diphosphate: step 7/9. This is Histidinol-phosphate aminotransferase 2 from Bacillus thuringiensis subsp. konkukian (strain 97-27).